Reading from the N-terminus, the 298-residue chain is Acetylglutamate kinase (298 aa).

Substrate contacts are provided by residues 69 to 70 (GG), Arg91, and Asn196.

The protein belongs to the acetylglutamate kinase family. ArgB subfamily.

The protein resides in the cytoplasm. The enzyme catalyses N-acetyl-L-glutamate + ATP = N-acetyl-L-glutamyl 5-phosphate + ADP. It participates in amino-acid biosynthesis; L-arginine biosynthesis; N(2)-acetyl-L-ornithine from L-glutamate: step 2/4. Its function is as follows. Catalyzes the ATP-dependent phosphorylation of N-acetyl-L-glutamate. The sequence is that of Acetylglutamate kinase from Nitrobacter winogradskyi (strain ATCC 25391 / DSM 10237 / CIP 104748 / NCIMB 11846 / Nb-255).